Here is a 264-residue protein sequence, read N- to C-terminus: PDZ domain-containing protein 9 (264 aa).

One can recognise a PDZ domain in the interval 22–109 (VHNLSKTQQT…GTVLQIKVYR (88 aa)).

This chain is PDZ domain-containing protein 9 (PDZD9), found in Macaca fascicularis (Crab-eating macaque).